The sequence spans 1172 residues: DNA-directed RNA polymerase subunit beta (1172 aa).

The protein belongs to the RNA polymerase beta chain family. In terms of assembly, the RNAP catalytic core consists of 2 alpha, 1 beta, 1 beta' and 1 omega subunit. When a sigma factor is associated with the core the holoenzyme is formed, which can initiate transcription.

It catalyses the reaction RNA(n) + a ribonucleoside 5'-triphosphate = RNA(n+1) + diphosphate. Its function is as follows. DNA-dependent RNA polymerase catalyzes the transcription of DNA into RNA using the four ribonucleoside triphosphates as substrates. The chain is DNA-directed RNA polymerase subunit beta from Mycobacterium sp. (strain JLS).